The sequence spans 125 residues: Large ribosomal subunit protein bL12 (125 aa).

It belongs to the bacterial ribosomal protein bL12 family. As to quaternary structure, homodimer. Part of the ribosomal stalk of the 50S ribosomal subunit. Forms a multimeric L10(L12)X complex, where L10 forms an elongated spine to which 2 to 4 L12 dimers bind in a sequential fashion. Binds GTP-bound translation factors.

Functionally, forms part of the ribosomal stalk which helps the ribosome interact with GTP-bound translation factors. Is thus essential for accurate translation. The protein is Large ribosomal subunit protein bL12 of Coprothermobacter proteolyticus (strain ATCC 35245 / DSM 5265 / OCM 4 / BT).